Here is a 201-residue protein sequence, read N- to C-terminus: Recombination protein RecR (201 aa).

Residues 60-75 (CKKCFNLTSEDECEIC) form a C4-type zinc finger. Residues 83 to 177 (KLICVVAETK…KVTRIAYGLP (95 aa)) form the Toprim domain.

The protein belongs to the RecR family.

Its function is as follows. May play a role in DNA repair. It seems to be involved in an RecBC-independent recombinational process of DNA repair. It may act with RecF and RecO. In Prochlorococcus marinus (strain MIT 9215), this protein is Recombination protein RecR.